The following is a 439-amino-acid chain: Mitochondrial distribution and morphology protein 12 (439 aa).

Residues 1-439 enclose the SMP-LTD domain; that stretch reads MSIDINWEAA…VYPSFWTFLV (439 aa). Positions 71 to 84 are enriched in acidic residues; that stretch reads EEDEGDEDFSDDQD. 3 disordered regions span residues 71–104, 182–278, and 362–385; these read EEDEGDEDFSDDQDGAPKHPPTIATERSGAGTWQ, TPLA…HEKK, and YIPGINPIGGGASGGAASSRRRDD. The segment covering 212-229 has biased composition (basic and acidic residues); the sequence is DYPRPVHRQTDTDIDSGH. The segment covering 230 to 255 has biased composition (polar residues); that stretch reads SRPSTADTLNSINSQRISNPALSHPH. The span at 256-269 shows a compositional bias: basic and acidic residues; sequence SSNESHPDTRDHSP.

The protein belongs to the MDM12 family. As to quaternary structure, component of the ER-mitochondria encounter structure (ERMES) or MDM complex, composed of MMM1, MDM10, MDM12 and MDM34. An MMM1 homodimer associates with one molecule of MDM12 on each side in a pairwise head-to-tail manner, and the SMP-LTD domains of MMM1 and MDM12 generate a continuous hydrophobic tunnel for phospholipid trafficking.

Its subcellular location is the mitochondrion outer membrane. It is found in the endoplasmic reticulum membrane. Functionally, component of the ERMES/MDM complex, which serves as a molecular tether to connect the endoplasmic reticulum (ER) and mitochondria. Components of this complex are involved in the control of mitochondrial shape and protein biogenesis, and function in nonvesicular lipid trafficking between the ER and mitochondria. MDM12 is required for the interaction of the ER-resident membrane protein MMM1 and the outer mitochondrial membrane-resident beta-barrel protein MDM10. The MDM12-MMM1 subcomplex functions in the major beta-barrel assembly pathway that is responsible for biogenesis of all mitochondrial outer membrane beta-barrel proteins, and acts in a late step after the SAM complex. The MDM10-MDM12-MMM1 subcomplex further acts in the TOM40-specific pathway after the action of the MDM12-MMM1 complex. Essential for establishing and maintaining the structure of mitochondria and maintenance of mtDNA nucleoids. This Uncinocarpus reesii (strain UAMH 1704) protein is Mitochondrial distribution and morphology protein 12.